A 230-amino-acid polypeptide reads, in one-letter code: Large ribosomal subunit protein uL1 (230 aa).

It belongs to the universal ribosomal protein uL1 family. Part of the 50S ribosomal subunit.

Functionally, binds directly to 23S rRNA. The L1 stalk is quite mobile in the ribosome, and is involved in E site tRNA release. Its function is as follows. Protein L1 is also a translational repressor protein, it controls the translation of the L11 operon by binding to its mRNA. In Rhodopseudomonas palustris (strain BisB18), this protein is Large ribosomal subunit protein uL1.